A 188-amino-acid polypeptide reads, in one-letter code: Pyridoxal 5'-phosphate synthase subunit PdxT (188 aa).

Position 46 to 48 (46 to 48 (GES)) interacts with L-glutamine. Cysteine 78 acts as the Nucleophile in catalysis. L-glutamine-binding positions include arginine 106 and 132-133 (IR). Catalysis depends on charge relay system residues histidine 169 and glutamate 171.

This sequence belongs to the glutaminase PdxT/SNO family. As to quaternary structure, in the presence of PdxS, forms a dodecamer of heterodimers. Only shows activity in the heterodimer.

The catalysed reaction is aldehydo-D-ribose 5-phosphate + D-glyceraldehyde 3-phosphate + L-glutamine = pyridoxal 5'-phosphate + L-glutamate + phosphate + 3 H2O + H(+). The enzyme catalyses L-glutamine + H2O = L-glutamate + NH4(+). It functions in the pathway cofactor biosynthesis; pyridoxal 5'-phosphate biosynthesis. Catalyzes the hydrolysis of glutamine to glutamate and ammonia as part of the biosynthesis of pyridoxal 5'-phosphate. The resulting ammonia molecule is channeled to the active site of PdxS. In Tropheryma whipplei (strain TW08/27) (Whipple's bacillus), this protein is Pyridoxal 5'-phosphate synthase subunit PdxT.